A 946-amino-acid polypeptide reads, in one-letter code: DNA primase (946 aa).

Positions 596–626 are disordered; sequence RDTEEDEDGKEDKNNVPDNGVFQKTTSSVDT. Residues 617–626 show a composition bias toward polar residues; the sequence is FQKTTSSVDT. Residues 881–920 form a CHC2-type zinc finger; it reads CLNYTHRNPQETVQVFIDLRTEHSYALWASLWSRCFTKKC.

Belongs to the herpesviridae DNA primase family. Associates with the helicase and the primase-associated factor to form the helicase-primase factor.

Its subcellular location is the host nucleus. In terms of biological role, essential component of the helicase/primase complex. Unwinds the DNA at the replication forks and generates single-stranded DNA for both leading and lagging strand synthesis. The primase initiates primer synthesis and thereby produces large amount of short RNA primers on the lagging strand that the polymerase elongates using dNTPs. The polypeptide is DNA primase (UL70) (Human cytomegalovirus (strain AD169) (HHV-5)).